The primary structure comprises 239 residues: Ribonuclease PH (239 aa).

Residues arginine 86 and 124 to 126 contribute to the phosphate site; that span reads GTR.

This sequence belongs to the RNase PH family. As to quaternary structure, homohexameric ring arranged as a trimer of dimers.

The catalysed reaction is tRNA(n+1) + phosphate = tRNA(n) + a ribonucleoside 5'-diphosphate. Its function is as follows. Phosphorolytic 3'-5' exoribonuclease that plays an important role in tRNA 3'-end maturation. Removes nucleotide residues following the 3'-CCA terminus of tRNAs; can also add nucleotides to the ends of RNA molecules by using nucleoside diphosphates as substrates, but this may not be physiologically important. Probably plays a role in initiation of 16S rRNA degradation (leading to ribosome degradation) during starvation. This chain is Ribonuclease PH, found in Rhizobium etli (strain ATCC 51251 / DSM 11541 / JCM 21823 / NBRC 15573 / CFN 42).